A 280-amino-acid chain; its full sequence is DAGVSWKVYRNKTLGPISSVLTYGSLVTSFKQSADPRSDLVRFGVAPSYPASFAADVLANRLPRVSWVIPNVLESEHPAVPAAAGAFAIVNILRILLANPAVWEKTALIVSYDENGGFFDHVVPATAPAGTPGEYVTVPDIDQVPGSGGIRGPIGLGFRVPCFVISPYSRGPQMVHDTFDHTSQLRLLETRFGVPVPNLTAWRRSVTGDMTSTFNFAVPPNSSWPNLDYPGLHALSTVPQCVPNAALGTINRGIPYRVPDPQIMPTQETTPTRGIPSGPC.

The interval 258–280 (VPDPQIMPTQETTPTRGIPSGPC) is disordered.

Belongs to the bacterial phospholipase C family.

It localises to the secreted. The protein localises to the cell wall. The catalysed reaction is a 1,2-diacyl-sn-glycero-3-phosphocholine + H2O = phosphocholine + a 1,2-diacyl-sn-glycerol + H(+). It carries out the reaction 1,2-dihexadecanoyl-sn-glycero-3-phosphocholine + H2O = 1,2-dihexadecanoyl-sn-glycerol + phosphocholine + H(+). Involved in virulence. Induces cytotoxic effects on mouse macrophage cell lines, via direct or indirect enzymatic hydrolysis of cell membrane phospholipids. Hydrolyzes phosphatidylcholine. Does not have hemolytic activity. This is Phospholipase C D from Mycobacterium tuberculosis (strain ATCC 25618 / H37Rv).